The sequence spans 194 residues: MDVNNVELIISAVRPEQYPETDLPEYALAGRSNVGKSSFINTMIRRKSMARISQKPGKTQTLNFYKIEEALFFVDVPGYGFAKVSKTEREKWGVMIETYITSREQLRGVIQIVDLRHKPTEDDRMMYEFLKYYEIPVIVVATKADKIPRSKWQKNAKIVRETLDFDPDDKFVLFSSETKMGKDEAWQFIKEGME.

One can recognise an EngB-type G domain in the interval Asp-22–Glu-194. GTP is bound by residues Gly-30–Ser-37, Gly-57–Thr-61, Asp-75–Gly-78, Thr-142–Asp-145, and Phe-174–Ser-176. 2 residues coordinate Mg(2+): Ser-37 and Thr-59.

This sequence belongs to the TRAFAC class TrmE-Era-EngA-EngB-Septin-like GTPase superfamily. EngB GTPase family. Requires Mg(2+) as cofactor.

In terms of biological role, necessary for normal cell division and for the maintenance of normal septation. This chain is Probable GTP-binding protein EngB, found in Listeria welshimeri serovar 6b (strain ATCC 35897 / DSM 20650 / CCUG 15529 / CIP 8149 / NCTC 11857 / SLCC 5334 / V8).